The following is a 56-amino-acid chain: Arcadin-3 (56 aa).

It is found in the cytoplasm. The protein localises to the cytoskeleton. Functionally, part of an actin-like archaeal cytoskeleton. This is Arcadin-3 from Pyrobaculum calidifontis (strain DSM 21063 / JCM 11548 / VA1).